A 202-amino-acid polypeptide reads, in one-letter code: Solute carrier family 66 member 3 (202 aa).

A signal peptide spans 1-19; that stretch reads MEAGLLWFCNWSTLGVCAA. The next 4 membrane-spanning stretches (helical) occupy residues 33 to 53, 64 to 84, 94 to 114, and 171 to 191; these read SARG…LVFL, LTYL…LFVF, LPYM…KWII, and LTIL…TATV.

It localises to the membrane. This is Solute carrier family 66 member 3 (Slc66a3) from Mus musculus (Mouse).